A 313-amino-acid chain; its full sequence is Sideroflexin-4 (313 aa).

The next 5 helical transmembrane spans lie at 87–107, 141–161, 175–191, 230–247, and 269–289; these read AALL…VKSL, LLLG…PRLL, FIPV…NVIA, VVLF…AYFF, and VLVM…IGRI.

The protein belongs to the sideroflexin family.

The protein localises to the mitochondrion inner membrane. Functionally, mitochondrial amino-acid transporter. Does not act as a serine transporter: not able to mediate transport of serine into mitochondria. The chain is Sideroflexin-4 from Bos taurus (Bovine).